The following is a 191-amino-acid chain: RNA polymerase sigma factor CnrH (191 aa).

Positions 49 to 62 (DVVQDTFVAAWHAL) match the Polymerase core binding motif. A DNA-binding region (H-T-H motif) is located at residues 156-175 (QPEAAAVLGLSVKAVEGRIG).

This sequence belongs to the sigma-70 factor family. ECF subfamily.

In terms of biological role, sigma factors are initiation factors that promote the attachment of RNA polymerase to specific initiation sites and are then released. This sigma factor regulates the genes for a membrane-located efflux system that confers resistance to nickel and cobalt. Functionally, cnrH alone is able to activate CNR expression, while both CnrY and CrnX are needed for nickel induction of cnrH. Binds DNA in an RNA polymerase-dependent fashion. CnrH may be controlled by a CnrYX transmembrane anti-sigma factor complex which binds CnrH in the absence of Ni(2+). If Ni(2+) appears in the periplasm, it may be bound by CnrR (CnrX); the signal then would be transmitted by CnrY into the cytoplasm and CnrH would be released. In Cupriavidus metallidurans (strain ATCC 43123 / DSM 2839 / NBRC 102507 / CH34) (Ralstonia metallidurans), this protein is RNA polymerase sigma factor CnrH (cnrH).